A 1166-amino-acid polypeptide reads, in one-letter code: ATP-dependent helicase/deoxyribonuclease subunit B (1166 aa).

Positions 1-285 constitute a UvrD-like helicase ATP-binding domain; that stretch reads MGAVFLSGRS…VRLEETKRHR (285 aa). Residue 8–15 coordinates ATP; that stretch reads GRSGSGKT. The region spanning 279–586 is the UvrD-like helicase C-terminal domain; sequence EETKRHRHHP…KFALIPPALD (308 aa). [4Fe-4S] cluster is bound by residues C801, C1121, C1124, and C1130.

The protein belongs to the helicase family. AddB/RexB type 1 subfamily. In terms of assembly, heterodimer of AddA and AddB. Mg(2+) serves as cofactor. It depends on [4Fe-4S] cluster as a cofactor.

Its function is as follows. The heterodimer acts as both an ATP-dependent DNA helicase and an ATP-dependent, dual-direction single-stranded exonuclease. Recognizes the chi site generating a DNA molecule suitable for the initiation of homologous recombination. The AddB subunit has 5' -&gt; 3' nuclease activity but not helicase activity. In Bacillus licheniformis (strain ATCC 14580 / DSM 13 / JCM 2505 / CCUG 7422 / NBRC 12200 / NCIMB 9375 / NCTC 10341 / NRRL NRS-1264 / Gibson 46), this protein is ATP-dependent helicase/deoxyribonuclease subunit B.